The following is a 297-amino-acid chain: N-acetylmuramic acid 6-phosphate etherase (297 aa).

The SIS domain occupies 55–218 (AAAALKSGGR…STGAMVKFGK (164 aa)). Glu-83 (proton donor) is an active-site residue. The active site involves Glu-114.

This sequence belongs to the GCKR-like family. MurNAc-6-P etherase subfamily. Homodimer.

The enzyme catalyses N-acetyl-D-muramate 6-phosphate + H2O = N-acetyl-D-glucosamine 6-phosphate + (R)-lactate. Its pathway is amino-sugar metabolism; 1,6-anhydro-N-acetylmuramate degradation. It participates in amino-sugar metabolism; N-acetylmuramate degradation. The protein operates within cell wall biogenesis; peptidoglycan recycling. In terms of biological role, specifically catalyzes the cleavage of the D-lactyl ether substituent of MurNAc 6-phosphate, producing GlcNAc 6-phosphate and D-lactate. Together with AnmK, is also required for the utilization of anhydro-N-acetylmuramic acid (anhMurNAc) either imported from the medium or derived from its own cell wall murein, and thus plays a role in cell wall recycling. The sequence is that of N-acetylmuramic acid 6-phosphate etherase from Salmonella paratyphi A (strain ATCC 9150 / SARB42).